We begin with the raw amino-acid sequence, 76 residues long: Potassium/proton antiporter CemA (76 aa).

A helical transmembrane segment spans residues 35-52 (QILSCLVSIFPVILDTIF).

The protein belongs to the CemA family.

Its subcellular location is the plastid. It is found in the chloroplast inner membrane. The catalysed reaction is K(+)(in) + H(+)(out) = K(+)(out) + H(+)(in). Its function is as follows. Contributes to K(+)/H(+) antiport activity by supporting proton efflux to control proton extrusion and homeostasis in chloroplasts in a light-dependent manner to modulate photosynthesis. Prevents excessive induction of non-photochemical quenching (NPQ) under continuous-light conditions. Indirectly promotes efficient inorganic carbon uptake into chloroplasts. In Vicia faba (Broad bean), this protein is Potassium/proton antiporter CemA.